Reading from the N-terminus, the 677-residue chain is Fermitin family homolog 1 (677 aa).

The region spanning 96–653 (MLRLRLPNLK…HEYIGGYIFL (558 aa)) is the FERM domain. 3 positions are modified to phosphoserine: Ser-170, Ser-179, and Ser-361. The PH domain occupies 337–433 (ESEVDEIEAA…EVVPNVNVAE (97 aa)).

Belongs to the kindlin family. Interacts with the cytoplasmic domain of integrins ITGB1 and ITGB3.

The protein resides in the cytoplasm. It is found in the cytoskeleton. Its subcellular location is the cell junction. The protein localises to the focal adhesion. It localises to the cell projection. The protein resides in the ruffle membrane. Functionally, involved in cell adhesion. Contributes to integrin activation. When coexpressed with talin, potentiates activation of ITGA2B. Required for normal keratinocyte proliferation. Required for normal polarization of basal keratinocytes in skin, and for normal cell shape. Required for normal adhesion of keratinocytes to fibronectin and laminin, and for normal keratinocyte migration to wound sites. This Pongo abelii (Sumatran orangutan) protein is Fermitin family homolog 1 (FERMT1).